A 191-amino-acid polypeptide reads, in one-letter code: Orotate phosphoribosyltransferase (191 aa).

Residue 116 to 124 participates in 5-phospho-alpha-D-ribose 1-diphosphate binding; it reads EDVVTTGGS. The orotate site is built by Thr120 and Arg148.

This sequence belongs to the purine/pyrimidine phosphoribosyltransferase family. PyrE subfamily. Homodimer. It depends on Mg(2+) as a cofactor.

It catalyses the reaction orotidine 5'-phosphate + diphosphate = orotate + 5-phospho-alpha-D-ribose 1-diphosphate. It participates in pyrimidine metabolism; UMP biosynthesis via de novo pathway; UMP from orotate: step 1/2. Functionally, catalyzes the transfer of a ribosyl phosphate group from 5-phosphoribose 1-diphosphate to orotate, leading to the formation of orotidine monophosphate (OMP). This is Orotate phosphoribosyltransferase from Carboxydothermus hydrogenoformans (strain ATCC BAA-161 / DSM 6008 / Z-2901).